The following is a 260-amino-acid chain: Ribosomal RNA small subunit methyltransferase G (260 aa).

3 residues coordinate S-adenosyl-L-methionine: Gly111, Phe116, and Arg181.

This sequence belongs to the methyltransferase superfamily. RNA methyltransferase RsmG family.

The protein resides in the cytoplasm. The enzyme catalyses guanosine(527) in 16S rRNA + S-adenosyl-L-methionine = N(7)-methylguanosine(527) in 16S rRNA + S-adenosyl-L-homocysteine. Its function is as follows. Specifically methylates the N7 position of guanine in position 527 of 16S rRNA. This is Ribosomal RNA small subunit methyltransferase G from Nitrobacter hamburgensis (strain DSM 10229 / NCIMB 13809 / X14).